A 435-amino-acid polypeptide reads, in one-letter code: Adenylosuccinate synthetase (435 aa).

Residues 17–23 and 47–49 each bind GTP; these read GDEGKGK and GHT. The active-site Proton acceptor is the aspartate 18. Mg(2+)-binding residues include aspartate 18 and glycine 47. IMP is bound by residues 18-21, 45-48, threonine 138, arginine 152, asparagine 232, threonine 247, and arginine 311; these read DEGK and NAGH. Residue histidine 48 is the Proton donor of the active site. 307 to 313 lines the substrate pocket; sequence VTTGRKR. Residues arginine 313, 339-341, and 421-423 each bind GTP; these read KLD and GVG.

This sequence belongs to the adenylosuccinate synthetase family. In terms of assembly, homodimer. The cofactor is Mg(2+).

The protein resides in the cytoplasm. It catalyses the reaction IMP + L-aspartate + GTP = N(6)-(1,2-dicarboxyethyl)-AMP + GDP + phosphate + 2 H(+). The protein operates within purine metabolism; AMP biosynthesis via de novo pathway; AMP from IMP: step 1/2. Plays an important role in the de novo pathway and in the salvage pathway of purine nucleotide biosynthesis. Catalyzes the first committed step in the biosynthesis of AMP from IMP. The polypeptide is Adenylosuccinate synthetase (Caenorhabditis briggsae).